We begin with the raw amino-acid sequence, 490 residues long: MDPVLVLVLTLSCLLLLSLWRQSSGRGKLPPGPTPLPIIGNILQIDVKDISKSFSYFSKIYGPVFTLYFGPKPTVVVHGYEAVKEALDDLGEEFSGRGSFPIVERMNNGLGLIFSNGTKWKELRHFSLMTLRNFGMGKRSIEDRIQEEASCLVEELRKTNGSLCDPTFILSCAPSNVICSVVFHNRFDYKDENFLNLMEKLNENFKILNSPWMQVCNALPAFIDYLPGSHNRVIKNFAEIKSYILRRVKEHQETLDMDNPRDFIDCFLIKMEQEKHNPRTEFTIESLMATVSDVFVAGSETTSTTLRYGLLLLLKHTEVTAKVQEEIDHVIGRHRRPCMQDRTRMPYTDAMVHEIQRYINLIPNNVPHAATCNVRFRNYVIPKGTDLVTSLTSVLHDDKEFPNPEVFDPGHFLDENGNFKKSDYFMPFSTGKRMCVGEALARMELFLLLTTIVQNFNLKSFVDTKDIDTTPMANTFGRVPPSYQLCFIPR.

Cysteine 435 is a binding site for heme.

The protein belongs to the cytochrome P450 family. Requires heme as cofactor.

The protein resides in the endoplasmic reticulum membrane. It is found in the microsome membrane. It catalyses the reaction an organic molecule + reduced [NADPH--hemoprotein reductase] + O2 = an alcohol + oxidized [NADPH--hemoprotein reductase] + H2O + H(+). Metabolizes arachidonic acid mainly to 19-hydroxyeicosatetraenoic acid (HETE). The sequence is that of Cytochrome P450 2C55 (Cyp2c55) from Rattus norvegicus (Rat).